The chain runs to 481 residues: DNA gyrase subunit B (481 aa).

The Toprim domain occupies 323–442 (CELYLVEGDS…QGYVYIAQPP (120 aa)). Mg(2+) contacts are provided by Glu329, Asp407, and Asp409.

The protein belongs to the type II topoisomerase GyrB family. In terms of assembly, heterotetramer, composed of two GyrA and two GyrB chains. In the heterotetramer, GyrA contains the active site tyrosine that forms a transient covalent intermediate with DNA, while GyrB binds cofactors and catalyzes ATP hydrolysis. Mg(2+) serves as cofactor. It depends on Mn(2+) as a cofactor. The cofactor is Ca(2+).

It localises to the cytoplasm. It carries out the reaction ATP-dependent breakage, passage and rejoining of double-stranded DNA.. Functionally, a type II topoisomerase that negatively supercoils closed circular double-stranded (ds) DNA in an ATP-dependent manner to modulate DNA topology and maintain chromosomes in an underwound state. Negative supercoiling favors strand separation, and DNA replication, transcription, recombination and repair, all of which involve strand separation. Also able to catalyze the interconversion of other topological isomers of dsDNA rings, including catenanes and knotted rings. Type II topoisomerases break and join 2 DNA strands simultaneously in an ATP-dependent manner. This chain is DNA gyrase subunit B (gyrB), found in Chitinophaga japonensis (Flexibacter japonensis).